The following is a 276-amino-acid chain: Formamidopyrimidine-DNA glycosylase (276 aa).

Residue Pro-2 is the Schiff-base intermediate with DNA of the active site. Residue Glu-3 is the Proton donor of the active site. Lys-58 acts as the Proton donor; for beta-elimination activity in catalysis. DNA contacts are provided by His-92, Arg-111, and Lys-154. The FPG-type zinc-finger motif lies at 239–273 (QVYGHVGEECPRCGNIFEKIKVSGRGTTFCPHCQV). The active-site Proton donor; for delta-elimination activity is the Arg-263.

Belongs to the FPG family. As to quaternary structure, monomer. Zn(2+) serves as cofactor.

The catalysed reaction is Hydrolysis of DNA containing ring-opened 7-methylguanine residues, releasing 2,6-diamino-4-hydroxy-5-(N-methyl)formamidopyrimidine.. It carries out the reaction 2'-deoxyribonucleotide-(2'-deoxyribose 5'-phosphate)-2'-deoxyribonucleotide-DNA = a 3'-end 2'-deoxyribonucleotide-(2,3-dehydro-2,3-deoxyribose 5'-phosphate)-DNA + a 5'-end 5'-phospho-2'-deoxyribonucleoside-DNA + H(+). Functionally, involved in base excision repair of DNA damaged by oxidation or by mutagenic agents. Acts as a DNA glycosylase that recognizes and removes damaged bases. Has a preference for oxidized purines, such as 7,8-dihydro-8-oxoguanine (8-oxoG). Has AP (apurinic/apyrimidinic) lyase activity and introduces nicks in the DNA strand. Cleaves the DNA backbone by beta-delta elimination to generate a single-strand break at the site of the removed base with both 3'- and 5'-phosphates. This chain is Formamidopyrimidine-DNA glycosylase, found in Lactobacillus acidophilus (strain ATCC 700396 / NCK56 / N2 / NCFM).